We begin with the raw amino-acid sequence, 623 residues long: tRNA uridine 5-carboxymethylaminomethyl modification enzyme MnmG (623 aa).

12–17 lines the FAD pocket; it reads GAGHAG. An NAD(+)-binding site is contributed by 272-286; that stretch reads GPRYCPSIEDKINRF.

It belongs to the MnmG family. Homodimer. Heterotetramer of two MnmE and two MnmG subunits. It depends on FAD as a cofactor.

The protein resides in the cytoplasm. NAD-binding protein involved in the addition of a carboxymethylaminomethyl (cmnm) group at the wobble position (U34) of certain tRNAs, forming tRNA-cmnm(5)s(2)U34. The sequence is that of tRNA uridine 5-carboxymethylaminomethyl modification enzyme MnmG from Flavobacterium psychrophilum (strain ATCC 49511 / DSM 21280 / CIP 103535 / JIP02/86).